The chain runs to 237 residues: tRNA (guanine-N(7)-)-methyltransferase (237 aa).

S-adenosyl-L-methionine is bound by residues E67, E92, D119, and D141. D141 is an active-site residue. Substrate-binding positions include K145, D177, and 214–217; that span reads TRYE.

This sequence belongs to the class I-like SAM-binding methyltransferase superfamily. TrmB family.

The catalysed reaction is guanosine(46) in tRNA + S-adenosyl-L-methionine = N(7)-methylguanosine(46) in tRNA + S-adenosyl-L-homocysteine. It participates in tRNA modification; N(7)-methylguanine-tRNA biosynthesis. Catalyzes the formation of N(7)-methylguanine at position 46 (m7G46) in tRNA. This is tRNA (guanine-N(7)-)-methyltransferase from Ruegeria pomeroyi (strain ATCC 700808 / DSM 15171 / DSS-3) (Silicibacter pomeroyi).